The following is a 279-amino-acid chain: Tryptophan synthase alpha chain (279 aa).

Catalysis depends on proton acceptor residues E50 and D61.

The protein belongs to the TrpA family. In terms of assembly, tetramer of two alpha and two beta chains.

It carries out the reaction (1S,2R)-1-C-(indol-3-yl)glycerol 3-phosphate + L-serine = D-glyceraldehyde 3-phosphate + L-tryptophan + H2O. The protein operates within amino-acid biosynthesis; L-tryptophan biosynthesis; L-tryptophan from chorismate: step 5/5. The alpha subunit is responsible for the aldol cleavage of indoleglycerol phosphate to indole and glyceraldehyde 3-phosphate. The protein is Tryptophan synthase alpha chain of Brucella melitensis biotype 2 (strain ATCC 23457).